A 484-amino-acid polypeptide reads, in one-letter code: Endoglucanase 3 (484 aa).

The N-terminal stretch at M1–A21 is a signal peptide. D77 acts as the Nucleophile in catalysis. The N-linked (GlcNAc...) asparagine glycan is linked to N370. Residues H402, D453, and E462 contribute to the active site.

It belongs to the glycosyl hydrolase 9 (cellulase E) family. As to expression, specifically expressed in root cap cells.

The protein localises to the secreted. It catalyses the reaction Endohydrolysis of (1-&gt;4)-beta-D-glucosidic linkages in cellulose, lichenin and cereal beta-D-glucans.. Functionally, may be involved in the sloughing (cell-cell separation) of the root cap cells from root tip. The protein is Endoglucanase 3 (CEL5) of Arabidopsis thaliana (Mouse-ear cress).